The primary structure comprises 100 residues: NAD(P)H-quinone oxidoreductase subunit 4L, chloroplastic (100 aa).

3 consecutive transmembrane segments (helical) span residues 1–21, 31–51, and 60–80; these read MLEHVLVLSAYLFSVGLYGLI, ICLELIFNAVNINFVTFSDFF, and IFAIFVIAIAAAEAAIGLAIL.

Belongs to the complex I subunit 4L family. As to quaternary structure, NDH is composed of at least 16 different subunits, 5 of which are encoded in the nucleus.

Its subcellular location is the plastid. The protein resides in the chloroplast thylakoid membrane. The enzyme catalyses a plastoquinone + NADH + (n+1) H(+)(in) = a plastoquinol + NAD(+) + n H(+)(out). It carries out the reaction a plastoquinone + NADPH + (n+1) H(+)(in) = a plastoquinol + NADP(+) + n H(+)(out). NDH shuttles electrons from NAD(P)H:plastoquinone, via FMN and iron-sulfur (Fe-S) centers, to quinones in the photosynthetic chain and possibly in a chloroplast respiratory chain. The immediate electron acceptor for the enzyme in this species is believed to be plastoquinone. Couples the redox reaction to proton translocation, and thus conserves the redox energy in a proton gradient. The protein is NAD(P)H-quinone oxidoreductase subunit 4L, chloroplastic of Trachelium caeruleum (Blue throatwort).